The following is a 996-amino-acid chain: Low-density lipoprotein receptor-related protein 8 (996 aa).

The signal sequence occupies residues 1–28; the sequence is MGRPELGALRPLALLLLLLLQLQHLSAA. The Extracellular portion of the chain corresponds to 29 to 858; sequence DPLPGGQGPV…GSQMGSTVTA (830 aa). LDL-receptor class A domains follow at residues 40 to 76, 79 to 117, 120 to 158, 160 to 196, 199 to 238, 250 to 287, 290 to 326, and 330 to 369; these read ECEEDQFRCRNERCIPLVWRCDEDNDCSDNSDEDDCP, TCADSDFTCDNGHCIPERWKCDGEEECPDGSDESKATCS, ECPAEKLSCGPTSHKCVPASWRCDGEKDCEGGADEAGCP, LCAPHEFQCSNRSCLASVFVCDGDDDCGDGSDERGCS, ACPPREFRCGGGGTCIPERWVCDRQFDCEDRSDEAAELCG, ACAPTAQFTCRSGECIHLGWRCDGDRDCKDKSDEADCS, PCRENEFQCGDGTCVLAIKRCNQERDCPDGSDEAGCL, and TCEGPRRFQCKSGECVDGGKVCDDQRDCRDWSDEPQKVCG. 30 cysteine pairs are disulfide-bonded: cysteine 41–cysteine 53, cysteine 48–cysteine 66, cysteine 60–cysteine 75, cysteine 80–cysteine 92, cysteine 87–cysteine 105, cysteine 99–cysteine 116, cysteine 121–cysteine 135, cysteine 128–cysteine 148, cysteine 142–cysteine 157, cysteine 161–cysteine 173, cysteine 168–cysteine 186, cysteine 180–cysteine 195, cysteine 200–cysteine 213, cysteine 207–cysteine 226, cysteine 220–cysteine 237, cysteine 251–cysteine 264, cysteine 259–cysteine 277, cysteine 271–cysteine 286, cysteine 291–cysteine 303, cysteine 298–cysteine 316, cysteine 310–cysteine 325, cysteine 331–cysteine 344, cysteine 339–cysteine 357, cysteine 351–cysteine 368, cysteine 373–cysteine 384, cysteine 380–cysteine 393, cysteine 395–cysteine 407, cysteine 413–cysteine 423, cysteine 419–cysteine 432, and cysteine 434–cysteine 447. Residues tryptophan 58, aspartate 61, aspartate 63, aspartate 65, aspartate 71, and glutamate 72 each contribute to the Ca(2+) site. The N-linked (GlcNAc...) asparagine glycan is linked to asparagine 170. The EGF-like 1 domain maps to 364–408; sequence PQKVCGLNECLHNNGGCSHICTDLKIGFECTCPAGFQLLDQKTCG. In terms of domain architecture, EGF-like 2; calcium-binding spans 409–448; sequence DIDECQDPDACSQICVNYKGYFKCECHPGYEMDTLTKNCK. LDL-receptor class B repeat units follow at residues 495-541, 542-584, 585-628, 629-671, and 672-714; these read NRIY…DWVH, KHIY…DPLR, GFMY…DLLS, QRLY…AVFE, and DKVF…FHEL. An N-linked (GlcNAc...) asparagine glycan is attached at asparagine 551. Residues 773–831 form a clustered O-linked oligosaccharides region; the sequence is STSTTTLASAMTRTVPATTRAPGTTIHDPTYQNHSTETPSQTAAAPHSVNVPRAPSTSP. The interval 778–851 is disordered; sequence TLASAMTRTV…SQHYGNEGSQ (74 aa). Residues 802 to 815 are compositionally biased toward polar residues; that stretch reads TYQNHSTETPSQTA. The N-linked (GlcNAc...) asparagine glycan is linked to asparagine 805. Over residues 824–839 the composition is skewed to low complexity; the sequence is PRAPSTSPSTPSPATS. Asparagine 840 is a glycosylation site (N-linked (GlcNAc...) asparagine). Residues 840–851 show a composition bias toward polar residues; that stretch reads NHSQHYGNEGSQ. A helical membrane pass occupies residues 859–881; the sequence is AVIGVIVPIVVIALLCMSGYLIW. Residues 882–996 lie on the Cytoplasmic side of the membrane; that stretch reads RNWKRKNTKS…ALSLEDDGLP (115 aa).

This sequence belongs to the LDLR family. In terms of assembly, homooligomer. Interacts with VLDLR. Reelin associates with two or more receptor molecules. Interacts with DAB1 and JNK-interacting proteins. Interacts with SNX17. Interacts with PCSK9. Interacts with MDK; this interaction is calcium dependent. Interacts with CLU. Post-translationally, O-glycosylated. Some alternatively spliced isoforms lack the O-linked sugar domain. In terms of processing, undergoes sequential, furin and gamma-secretase dependent, proteolytic processing, resulting in the extracellular release of the entire ligand-binding domain as a soluble polypeptide and in the intracellular domain (ICD) release into the cytoplasm. The gamma-secretase-dependent proteolytical processing occurs after the bulk of the extracellular domain has been shed, in a furin-dependent manner, in alternatively spliced isoforms carrying the furin cleavage site. Hypoglycosylation (mainly hypo-O-glycosylation) leads to increased extracellular cleavage, which in turn results in accelerating release of the intracellular domain (ICD) by the gamma-secretase. The resulting receptor fragment is able to inhibit Reelin signaling and in particular the Reelin-induced DAB1 phosphorylation. Tyrosine phosphorylated upon apoE binding. Post-translationally, ubiquitinated by MYLIP leading to degradation. As to expression, expressed in neurons throughout the brain, with strong expression in pyramidal neurons of the hippocampus, granule cells of the dentate gyrus, cortical neurons and Purkinje cells of the cerebellum. Also expressed in the epithelium of the choroid plexus and of the blood vessels (apical expression), as well as in the epididymis.

The protein localises to the cell membrane. It is found in the secreted. Functionally, cell surface receptor for Reelin (RELN) and apolipoprotein E (apoE)-containing ligands. LRP8 participates in transmitting the extracellular Reelin signal to intracellular signaling processes, by binding to DAB1 on its cytoplasmic tail. Reelin acts via both the VLDL receptor (VLDLR) and LRP8 to regulate DAB1 tyrosine phosphorylation and microtubule function in neurons. LRP8 has higher affinity for Reelin than VLDLR. LRP8 is thus a key component of the Reelin pathway which governs neuronal layering of the forebrain during embryonic brain development. Binds the endoplasmic reticulum resident receptor-associated protein (RAP). Binds dimers of beta 2-glycoprotein I and may be involved in the suppression of platelet aggregation in the vasculature. Highly expressed in the initial segment of the epididymis, where it affects the functional expression of clusterin and phospholipid hydroperoxide glutathione peroxidase (PHGPx), two proteins required for sperm maturation. May also function as an endocytic receptor. Not required for endocytic uptake of SEPP1 in the kidney which is mediated by LRP2. Together with its ligand, apolipoprotein E (apoE), may indirectly play a role in the suppression of the innate immune response by controlling the survival of myeloid-derived suppressor cells. The polypeptide is Low-density lipoprotein receptor-related protein 8 (Lrp8) (Mus musculus (Mouse)).